The sequence spans 274 residues: Undecaprenyl-diphosphatase 1 (274 aa).

Transmembrane regions (helical) follow at residues Trp-8 to Val-28, Ile-45 to Ile-65, Phe-92 to Phe-112, Leu-120 to Ile-140, Phe-195 to Ile-215, Ile-230 to Met-250, and Gly-253 to Leu-273.

It belongs to the UppP family.

The protein localises to the cell membrane. It catalyses the reaction di-trans,octa-cis-undecaprenyl diphosphate + H2O = di-trans,octa-cis-undecaprenyl phosphate + phosphate + H(+). Catalyzes the dephosphorylation of undecaprenyl diphosphate (UPP). Confers resistance to bacitracin. In Halalkalibacterium halodurans (strain ATCC BAA-125 / DSM 18197 / FERM 7344 / JCM 9153 / C-125) (Bacillus halodurans), this protein is Undecaprenyl-diphosphatase 1.